The primary structure comprises 322 residues: HPr kinase/phosphorylase (322 aa).

Residues His-146 and Lys-167 contribute to the active site. ATP is bound at residue 161–168; sequence GDSGLGKS. Ser-168 contacts Mg(2+). Catalysis depends on Asp-185, which acts as the Proton acceptor; for phosphorylation activity. Proton donor; for dephosphorylation activity. The tract at residues 209 to 218 is important for the catalytic mechanism of both phosphorylation and dephosphorylation; it reads LEVRGLGLLD. Position 210 (Glu-210) interacts with Mg(2+). Arg-250 is an active-site residue. An important for the catalytic mechanism of dephosphorylation region spans residues 271–276; it reads QVAAGR.

Belongs to the HPrK/P family. In terms of assembly, homohexamer. Requires Mg(2+) as cofactor.

The catalysed reaction is [HPr protein]-L-serine + ATP = [HPr protein]-O-phospho-L-serine + ADP + H(+). It carries out the reaction [HPr protein]-O-phospho-L-serine + phosphate + H(+) = [HPr protein]-L-serine + diphosphate. In terms of biological role, catalyzes the ATP- as well as the pyrophosphate-dependent phosphorylation of a specific serine residue in HPr, a phosphocarrier protein of the phosphoenolpyruvate-dependent sugar phosphotransferase system (PTS). HprK/P also catalyzes the pyrophosphate-producing, inorganic phosphate-dependent dephosphorylation (phosphorolysis) of seryl-phosphorylated HPr (P-Ser-HPr). In Burkholderia cenocepacia (strain HI2424), this protein is HPr kinase/phosphorylase.